The sequence spans 81 residues: Small ribosomal subunit protein uS17 (81 aa).

It belongs to the universal ribosomal protein uS17 family. Part of the 30S ribosomal subunit.

One of the primary rRNA binding proteins, it binds specifically to the 5'-end of 16S ribosomal RNA. This is Small ribosomal subunit protein uS17 from Trichormus variabilis (strain ATCC 29413 / PCC 7937) (Anabaena variabilis).